We begin with the raw amino-acid sequence, 320 residues long: Cytochrome f (320 aa).

The signal sequence occupies residues 1 to 35 (MQNRNTFSWVKEQMTRFISVSIMIYVITRTSISNA). Heme contacts are provided by Tyr36, Cys56, Cys59, and His60. The helical transmembrane segment at 286-306 (VQGLLFFLASVILAQIFLVLK) threads the bilayer.

The protein belongs to the cytochrome f family. As to quaternary structure, the 4 large subunits of the cytochrome b6-f complex are cytochrome b6, subunit IV (17 kDa polypeptide, petD), cytochrome f and the Rieske protein, while the 4 small subunits are PetG, PetL, PetM and PetN. The complex functions as a dimer. Requires heme as cofactor.

The protein localises to the plastid. Its subcellular location is the chloroplast thylakoid membrane. Its function is as follows. Component of the cytochrome b6-f complex, which mediates electron transfer between photosystem II (PSII) and photosystem I (PSI), cyclic electron flow around PSI, and state transitions. In Liriodendron tulipifera (Tuliptree), this protein is Cytochrome f.